The following is a 920-amino-acid chain: MSDPHSSPLLPEPLSSRYKLYEAEFTSPSWPSTSPDTHPALPLLEMPEEKDLRSSNEDSHIVKIEKLNERSKRKDDGVAHRDSAGQRCICLSKAVGYLTGDMKEYRIWLKDKHLALQFIDWVLRGTAQVMFINNPLSGLIIFIGLLIQNPWWTITGGLGTVVSTLTALALGQDRSAIASGLHGYNGMLVGLLMAVFSEKLDYYWWLLFPVTFTAMSCPVLSSALNSIFSKWDLPVFTLPFNIAVTLYLAATGHYNLFFPTTLVEPVSSVPNITWTEMEMPLLLQAIPVGVGQVYGCDNPWTGGVFLVALFISSPLICLHAAIGSIVGLLAALSVATPFETIYTGLWSYNCVLSCIAIGGMFYALTWQTHLLALICALFCAYMEAAISNIMSVVGVPPGTWAFCLATIIFLLLTTNNPAIFRLPLSKVTYPEANRIYYLTVKSGEEEKAPSGGGGEHPPTAGPKVEEGSEAVLSKHRSVFHIEWSSIRRRSKVFGKGEHQERQNKDPFPYRYRKPTVELLDLDTMEESSEIKVETNISKTSWIRSSMAASGKRVSKALSYITGEMKECGEGLKDKSPVFQFFDWVLRGTSQVMFVNNPLSGILIILGLFIQNPWWAISGCLGTIMSTLTALILSQDKSAIAAGFHGYNGVLVGLLMAVFSDKGDYYWWLLLPVIIMSMSCPILSSALGTIFSKWDLPVFTLPFNITVTLYLAATGHYNLFFPTTLLQPASAMPNITWSEVQVPLLLRAIPVGIGQVYGCDNPWTGGIFLIALFISSPLICLHAAIGSTMGMLAALTIATPFDSIYFGLCGFNSTLACIAIGGMFYVITWQTHLLAIACALFAAYLGAALANMLSVFGLPPCTWPFCLSALTFLLLTTNNPAIYKLPLSKVTYPEANRIYYLSQERNRRASIITKYQAYDVS.

A disordered region spans residues 25–57; that stretch reads FTSPSWPSTSPDTHPALPLLEMPEEKDLRSSNE. Residues 26–39 show a composition bias toward low complexity; it reads TSPSWPSTSPDTHP. A compositionally biased stretch (basic and acidic residues) spans 47–57; the sequence is PEEKDLRSSNE. 9 consecutive transmembrane segments (helical) span residues 151 to 170, 176 to 196, 204 to 224, 233 to 253, 272 to 291, 302 to 322, 346 to 366, 370 to 390, and 392 to 412; these read WWTITGGLGTVVSTLTALAL, AIASGLHGYNGMLVGLLMAVF, WWLLFPVTFTAMSCPVLSSAL, LPVFTLPFNIAVTLYLAATGH, ITWTEMEMPLLLQAIPVGVG, GGVFLVALFISSPLICLHAAI, WSYNCVLSCIAIGGMFYALTW, LLALICALFCAYMEAAISNIM, and VVGVPPGTWAFCLATIIFLLL. The interval 446-467 is disordered; the sequence is EKAPSGGGGEHPPTAGPKVEEG. Serine 477 is subject to Phosphoserine. 4 helical membrane-spanning segments follow: residues 600 to 620, 638 to 658, 666 to 686, and 695 to 715; these read GILIILGLFIQNPWWAISGCL, AIAAGFHGYNGVLVGLLMAVF, WWLLLPVIIMSMSCPILSSAL, and LPVFTLPFNITVTLYLAATGH. Asparagine 733 carries an N-linked (GlcNAc...) asparagine glycan. The next 4 membrane-spanning stretches (helical) occupy residues 764–784, 803–823, 832–852, and 854–874; these read GGIFLIALFISSPLICLHAAI, IYFGLCGFNSTLACIAIGGMF, LLAIACALFAAYLGAALANML, and VFGLPPCTWPFCLSALTFLLL.

Belongs to the urea transporter family. Interacts with SNAPIN which enhances its urea transport activity. Epressed in the inner medulla of the kidney (at protein level). As to expression, expressed in the kidney.

It localises to the apical cell membrane. The protein localises to the cell membrane. It catalyses the reaction urea(in) = urea(out). Its activity is regulated as follows. Inhibited by phloretin. In terms of biological role, mediates the transport of urea driven by a concentration gradient across the cell membrane of the renal inner medullary collecting duct which is critical to the urinary concentrating mechanism. Functionally, mediates the transport of urea driven by a concentration gradient across the cell membrane of the kidney inner medullary collecting duct which is critical to the urinary concentrating mechanism. In Homo sapiens (Human), this protein is Urea transporter 2 (SLC14A2).